Consider the following 182-residue polypeptide: Large ribosomal subunit protein uL10 (182 aa).

This sequence belongs to the universal ribosomal protein uL10 family. In terms of assembly, part of the ribosomal stalk of the 50S ribosomal subunit. The N-terminus interacts with L11 and the large rRNA to form the base of the stalk. The C-terminus forms an elongated spine to which L12 dimers bind in a sequential fashion forming a multimeric L10(L12)X complex.

Forms part of the ribosomal stalk, playing a central role in the interaction of the ribosome with GTP-bound translation factors. The protein is Large ribosomal subunit protein uL10 of Koribacter versatilis (strain Ellin345).